The sequence spans 232 residues: Probable proteasome subunit alpha type-3 (232 aa).

The protein belongs to the peptidase T1A family. As to quaternary structure, the 26S proteasome consists of a 20S proteasome core and two 19S regulatory subunits. The 20S proteasome core is composed of 28 subunits that are arranged in four stacked rings, resulting in a barrel-shaped structure. The two end rings are each formed by seven alpha subunits, and the two central rings are each formed by seven beta subunits. The catalytic chamber with the active sites is on the inside of the barrel.

The protein localises to the cytoplasm. The protein resides in the nucleus. Its function is as follows. The proteasome degrades poly-ubiquitinated proteins in the cytoplasm and in the nucleus. It is essential for the regulated turnover of proteins and for the removal of misfolded proteins. The proteasome is a multicatalytic proteinase complex that is characterized by its ability to cleave peptides with Arg, Phe, Tyr, Leu, and Glu adjacent to the leaving group at neutral or slightly basic pH. It has an ATP-dependent proteolytic activity. This Encephalitozoon cuniculi (strain GB-M1) (Microsporidian parasite) protein is Probable proteasome subunit alpha type-3 (PRE9).